We begin with the raw amino-acid sequence, 276 residues long: Undecaprenyl-diphosphatase (276 aa).

Transmembrane regions (helical) follow at residues 48 to 68 (AANS…AIVF), 92 to 112 (LTIA…FLFE), 119 to 139 (LFSV…MLIA), 155 to 175 (ITYK…WPGF), 196 to 216 (ADFT…LKLV), 229 to 249 (FFLV…KFFL), and 255 to 275 (IKLV…IMLV).

It belongs to the UppP family.

It localises to the cell membrane. It catalyses the reaction di-trans,octa-cis-undecaprenyl diphosphate + H2O = di-trans,octa-cis-undecaprenyl phosphate + phosphate + H(+). Its function is as follows. Catalyzes the dephosphorylation of undecaprenyl diphosphate (UPP). Confers resistance to bacitracin. The sequence is that of Undecaprenyl-diphosphatase from Bacillus velezensis (strain DSM 23117 / BGSC 10A6 / LMG 26770 / FZB42) (Bacillus amyloliquefaciens subsp. plantarum).